A 360-amino-acid chain; its full sequence is Replication-associated protein (360 aa).

A CRESS-DNA virus Rep endonuclease domain is found at 11 to 114 (SHRNANTFLT…PLAVFERGTF (104 aa)). The short motif at 18 to 21 (FLTY) is the RCR-1 element. Residues Glu-52, His-60, and His-62 each coordinate a divalent metal cation. The RCR-2 motif lies at 60–62 (HLH). Tyr-100 serves as the catalytic For DNA cleavage activity. The RCR-3 motif lies at 100 to 103 (YILK). Glu-104 contributes to the a divalent metal cation binding site. An oligomerization region spans residues 175–187 (SANKLFPEIQEEF). Residue 229-236 (GPTRTGKS) participates in ATP binding. The tract at residues 252–270 (VDWSSYNEDAIYNIVDDIP) is transactivation. The short motif at 292–303 (KYGKKKKVQKKS) is the Nuclear localization signal element.

It belongs to the geminiviridae Rep protein family. In terms of assembly, homooligomer. Rep binds to repeated DNA motifs (iterons). Forms the O-complex, which is a Rep-DNA complex involved in the initiation of RCR. Part of the C- and V-complexes which are RepA-Rep-DNA complexes involved in the c-sense and v-sense transcription. Requires Mg(2+) as cofactor. Mn(2+) is required as a cofactor.

It localises to the host nucleus. Its function is as follows. Essential for the replication of viral ssDNA. The closed circular ssDNA genome is first converted to a superhelical dsDNA. Rep binds a specific region at the genome origin of replication. It introduces an endonucleolytic nick within the conserved sequence 5'-TAATATTAC-3' in the intergenic region of the genome present in all geminiviruses, thereby initiating the rolling circle replication (RCR). Following cleavage, binds covalently to the 5'-phosphate of DNA as a tyrosyl ester. The cleavage gives rise to a free 3'-OH that serves as a primer for the cellular DNA polymerase. The polymerase synthesizes the (+) strand DNA by rolling circle mechanism. After one round of replication, a Rep-catalyzed nucleotidyl transfer reaction releases a circular single-stranded virus genome, thereby terminating the replication. Displays origin-specific DNA cleavage, nucleotidyl transferase, ATPase and helicase activities. Acts as an inhibitor of C-sense gene transcription. The chain is Replication-associated protein from Maize streak virus genotype A (isolate Nigeria) (MSV).